The following is a 371-amino-acid chain: Glutamate 5-kinase (371 aa).

Lysine 14 contacts ATP. Positions 52, 139, and 151 each coordinate substrate. An ATP-binding site is contributed by 171 to 172; it reads SD. A PUA domain is found at 275–353; that stretch reads EGRLHLDSGA…ADLAMELGPS (79 aa).

The protein belongs to the glutamate 5-kinase family.

It is found in the cytoplasm. It catalyses the reaction L-glutamate + ATP = L-glutamyl 5-phosphate + ADP. The protein operates within amino-acid biosynthesis; L-proline biosynthesis; L-glutamate 5-semialdehyde from L-glutamate: step 1/2. Functionally, catalyzes the transfer of a phosphate group to glutamate to form L-glutamate 5-phosphate. This Frankia casuarinae (strain DSM 45818 / CECT 9043 / HFP020203 / CcI3) protein is Glutamate 5-kinase.